The sequence spans 135 residues: uncharacterized protein (135 aa).

The VOC domain maps to 4–129; that stretch reads SIVHIALVVN…YGNLWDLLQL (126 aa).

It to B.subtilis YwkD.

This is an uncharacterized protein from Shewanella frigidimarina (strain NCIMB 400).